Reading from the N-terminus, the 145-residue chain is Basic phospholipase A2 PC14 (145 aa).

The N-terminal stretch at 1–21 (MYPAHLLLLLAVCVSLLGASA) is a signal peptide. The propeptide occupies 22-27 (IPPLPL). Intrachain disulfides connect C38–C98, C54–C144, C56–C72, C71–C125, C78–C118, C87–C111, and C105–C116. Residues Y55, G57, and G59 each coordinate Ca(2+). The active site involves H75. A Ca(2+)-binding site is contributed by D76. Residue D119 is part of the active site.

Belongs to the phospholipase A2 family. Group I subfamily. D49 sub-subfamily. Ca(2+) is required as a cofactor.

The protein resides in the secreted. It carries out the reaction a 1,2-diacyl-sn-glycero-3-phosphocholine + H2O = a 1-acyl-sn-glycero-3-phosphocholine + a fatty acid + H(+). Functionally, PLA2 catalyzes the calcium-dependent hydrolysis of the 2-acyl groups in 3-sn-phosphoglycerides. In Laticauda laticaudata (Blue-ringed sea krait), this protein is Basic phospholipase A2 PC14.